We begin with the raw amino-acid sequence, 681 residues long: Probable glutamate carboxypeptidase LAMP1 (681 aa).

Residues Met1–Ser6 are Cytoplasmic-facing. Residues Leu7–Ser24 traverse the membrane as a helical; Signal-anchor for type II membrane protein segment. Residues Pro25 to Ile681 are Extracellular-facing. N-linked (GlcNAc...) asparagine glycans are attached at residues Asn42, Asn140, Asn166, and Asn299. The interval Ser241–Leu527 is catalytic. 2 residues coordinate Zn(2+): His333 and Asp343. Glu380 serves as the catalytic Nucleophile. Zn(2+) is bound by residues Glu381 and Asp409. Asn441 carries N-linked (GlcNAc...) asparagine glycosylation. His493 provides a ligand contact to Zn(2+). An N-linked (GlcNAc...) asparagine glycan is attached at Asn536.

It belongs to the peptidase M28 family. M28B subfamily. Zn(2+) serves as cofactor.

It is found in the endoplasmic reticulum membrane. It carries out the reaction Release of an unsubstituted, C-terminal glutamyl residue, typically from Ac-Asp-Glu or folylpoly-gamma-glutamates.. Its function is as follows. Acts in association with AMP1 to suppress ectopic stem cell niche formation in the shoot apical meristem (SAM) independently of cytokinin signaling pathway. The sequence is that of Probable glutamate carboxypeptidase LAMP1 from Arabidopsis thaliana (Mouse-ear cress).